The following is a 498-amino-acid chain: Argininosuccinate lyase 1 (498 aa).

This sequence belongs to the lyase 1 family. Argininosuccinate lyase subfamily.

The protein resides in the cytoplasm. It carries out the reaction 2-(N(omega)-L-arginino)succinate = fumarate + L-arginine. It functions in the pathway amino-acid biosynthesis; L-arginine biosynthesis; L-arginine from L-ornithine and carbamoyl phosphate: step 3/3. This is Argininosuccinate lyase 1 from Shouchella clausii (strain KSM-K16) (Alkalihalobacillus clausii).